The chain runs to 537 residues: CTP synthase (537 aa).

Positions 1 to 268 (MPAKFIFVTG…DSIVVERLKL (268 aa)) are amidoligase domain. Ser14 is a CTP binding site. UTP is bound at residue Ser14. Position 15–20 (15–20 (SLGKGI)) interacts with ATP. Tyr55 serves as a coordination point for L-glutamine. ATP is bound at residue Asp72. Mg(2+) is bound by residues Asp72 and Glu142. Residues 149 to 151 (DIE), 189 to 194 (KTKPTQ), and Lys225 each bind CTP. UTP-binding positions include 189–194 (KTKPTQ) and Lys225. The Glutamine amidotransferase type-1 domain occupies 293–534 (EIALVGKYVT…IGAACRRAGG (242 aa)). An L-glutamine-binding site is contributed by Gly354. Cys381 functions as the Nucleophile; for glutamine hydrolysis in the catalytic mechanism. Residues 382-385 (LGMQ), Glu405, and Arg462 each bind L-glutamine. Residues His507 and Glu509 contribute to the active site.

The protein belongs to the CTP synthase family. Homotetramer.

The enzyme catalyses UTP + L-glutamine + ATP + H2O = CTP + L-glutamate + ADP + phosphate + 2 H(+). The catalysed reaction is L-glutamine + H2O = L-glutamate + NH4(+). It carries out the reaction UTP + NH4(+) + ATP = CTP + ADP + phosphate + 2 H(+). It participates in pyrimidine metabolism; CTP biosynthesis via de novo pathway; CTP from UDP: step 2/2. Allosterically activated by GTP, when glutamine is the substrate; GTP has no effect on the reaction when ammonia is the substrate. The allosteric effector GTP functions by stabilizing the protein conformation that binds the tetrahedral intermediate(s) formed during glutamine hydrolysis. Inhibited by the product CTP, via allosteric rather than competitive inhibition. Its function is as follows. Catalyzes the ATP-dependent amination of UTP to CTP with either L-glutamine or ammonia as the source of nitrogen. Regulates intracellular CTP levels through interactions with the four ribonucleotide triphosphates. This chain is CTP synthase, found in Moorella thermoacetica (strain ATCC 39073 / JCM 9320).